Consider the following 602-residue polypeptide: uncharacterized protein (602 aa).

N-linked (GlcNAc...) asparagine glycans are attached at residues asparagine 305, asparagine 497, and asparagine 577.

Post-translationally, N-glycosylated.

The protein resides in the vacuole. This is an uncharacterized protein from Saccharomyces cerevisiae (strain ATCC 204508 / S288c) (Baker's yeast).